We begin with the raw amino-acid sequence, 149 residues long: Urease accessory protein UreE (149 aa).

The protein belongs to the UreE family.

It localises to the cytoplasm. Functionally, involved in urease metallocenter assembly. Binds nickel. Probably functions as a nickel donor during metallocenter assembly. This is Urease accessory protein UreE from Prochlorococcus marinus (strain MIT 9312).